The sequence spans 79 residues: Neurotoxin BmK-M9 (79 aa).

Positions 1-14 (MISFALLLMTGVES) are cleaved as a signal peptide. One can recognise an LCN-type CS-alpha/beta domain in the interval 16–78 (RDAYIAKPEN…VPIRVPGKCH (63 aa)). 4 cysteine pairs are disulfide-bonded: C26-C77, C30-C50, C36-C60, and C40-C62. Position 79 (R79) is a propeptide, removed by a carboxypeptidase.

Belongs to the long (4 C-C) scorpion toxin superfamily. Sodium channel inhibitor family. Alpha subfamily. As to expression, expressed by the venom gland.

The protein localises to the secreted. Binds to sodium channels (Nav) and inhibits the inactivation of the activated channels, thereby blocking neuronal transmission. This toxin is active against mammals. The protein is Neurotoxin BmK-M9 of Olivierus martensii (Manchurian scorpion).